Reading from the N-terminus, the 478-residue chain is Phenylalanine--tRNA ligase alpha subunit (478 aa).

L-phenylalanine contacts are provided by residues Thr318, 357-359 (QLE), and Tyr397. Mg(2+) is bound at residue Glu399. Phe422 contacts L-phenylalanine.

Belongs to the class-II aminoacyl-tRNA synthetase family. Phe-tRNA synthetase alpha subunit type 2 subfamily. In terms of assembly, tetramer of two alpha and two beta subunits. The cofactor is Mg(2+).

It localises to the cytoplasm. It carries out the reaction tRNA(Phe) + L-phenylalanine + ATP = L-phenylalanyl-tRNA(Phe) + AMP + diphosphate + H(+). The polypeptide is Phenylalanine--tRNA ligase alpha subunit (Methanospirillum hungatei JF-1 (strain ATCC 27890 / DSM 864 / NBRC 100397 / JF-1)).